A 212-amino-acid polypeptide reads, in one-letter code: Thiamine-phosphate synthase (212 aa).

Residues 40-44 (QFREK) and N75 each bind 4-amino-2-methyl-5-(diphosphooxymethyl)pyrimidine. Residues D76 and D95 each coordinate Mg(2+). S113 lines the 4-amino-2-methyl-5-(diphosphooxymethyl)pyrimidine pocket. Residue 139 to 141 (TPS) coordinates 2-[(2R,5Z)-2-carboxy-4-methylthiazol-5(2H)-ylidene]ethyl phosphate. Residue K142 coordinates 4-amino-2-methyl-5-(diphosphooxymethyl)pyrimidine. 2-[(2R,5Z)-2-carboxy-4-methylthiazol-5(2H)-ylidene]ethyl phosphate-binding positions include G171 and 191–192 (IS).

Belongs to the thiamine-phosphate synthase family. The cofactor is Mg(2+).

It catalyses the reaction 2-[(2R,5Z)-2-carboxy-4-methylthiazol-5(2H)-ylidene]ethyl phosphate + 4-amino-2-methyl-5-(diphosphooxymethyl)pyrimidine + 2 H(+) = thiamine phosphate + CO2 + diphosphate. The catalysed reaction is 2-(2-carboxy-4-methylthiazol-5-yl)ethyl phosphate + 4-amino-2-methyl-5-(diphosphooxymethyl)pyrimidine + 2 H(+) = thiamine phosphate + CO2 + diphosphate. It carries out the reaction 4-methyl-5-(2-phosphooxyethyl)-thiazole + 4-amino-2-methyl-5-(diphosphooxymethyl)pyrimidine + H(+) = thiamine phosphate + diphosphate. The protein operates within cofactor biosynthesis; thiamine diphosphate biosynthesis; thiamine phosphate from 4-amino-2-methyl-5-diphosphomethylpyrimidine and 4-methyl-5-(2-phosphoethyl)-thiazole: step 1/1. Functionally, condenses 4-methyl-5-(beta-hydroxyethyl)thiazole monophosphate (THZ-P) and 2-methyl-4-amino-5-hydroxymethyl pyrimidine pyrophosphate (HMP-PP) to form thiamine monophosphate (TMP). The sequence is that of Thiamine-phosphate synthase from Staphylococcus carnosus (strain TM300).